A 163-amino-acid polypeptide reads, in one-letter code: Gas vesicle protein H2 (163 aa).

Residues 57–92 (LGSDARSPSTPAGNADDAGDAETAHIETRASDDSDD) form a disordered region. A compositionally biased stretch (basic and acidic residues) spans 78-88 (ETAHIETRASD).

The protein belongs to the gas vesicle GvpH family. As to quaternary structure, gvpF to GvpM interact with each other in vitro, and may form multi-subunit complex(es). Interacts with GvpC. Might interact with GvpA.

It is found in the gas vesicle. The protein localises to the cytoplasm. A minor component of the gas vesicle, also found in soluble extracts. Proteins GvpF to GvpM might be involved in nucleating gas vesicle formation. Gas vesicles are hollow, gas filled proteinaceous nanostructures found in several microbial planktonic microorganisms. They allow positioning of halobacteria at the optimal depth for growth in the poorly aerated, shallow brine pools of their habitat. In terms of biological role, expression of 2 c-vac DNA fragments containing 2 divergently transcribed regions (gvpE-gvpF-gvpG-gvpH-gvpI-gvpJ-gvpK-gvpL-gvpM and gvpA-gvpC-gvpN-gvpO) allows H.volcanii to produce gas vesicles. In Halobacterium salinarum (strain ATCC 700922 / JCM 11081 / NRC-1) (Halobacterium halobium), this protein is Gas vesicle protein H2.